The chain runs to 105 residues: Host transcription reprogramming factor 7 (105 aa).

Positions 1–19 (MKTKTIFQLVALFAIGATA) are cleaved as a signal peptide. A C2H2-type zinc finger spans residues 69 to 95 (YWCRIGNCNAAFKSLAARCRHEKTAVH).

The protein resides in the secreted. Its subcellular location is the host nucleus. In terms of biological role, probable secreted effector that translocates into the nuclei of host cells to reprogram the expression of targeted genes by binding on effector binding elements in rice. The sequence is that of Host transcription reprogramming factor 7 from Pyricularia oryzae (strain 70-15 / ATCC MYA-4617 / FGSC 8958) (Rice blast fungus).